The chain runs to 89 residues: MSRSSKKGPFVDPKVFFKVQKAAETGSKEPIKTWARSCTIVPEFVNVTFMVHNGRQHIKVLVTEDMVGHKLGEFAPTRTFKGHGGKGKR.

This sequence belongs to the universal ribosomal protein uS19 family.

Functionally, protein S19 forms a complex with S13 that binds strongly to the 16S ribosomal RNA. The polypeptide is Small ribosomal subunit protein uS19 (Rhodopirellula baltica (strain DSM 10527 / NCIMB 13988 / SH1)).